Reading from the N-terminus, the 334-residue chain is Mevalonate kinase (334 aa).

110 to 120 (PVGAGLGSSAA) provides a ligand contact to ATP. The active-site Proton acceptor is the Asp-161.

This sequence belongs to the GHMP kinase family. Mevalonate kinase subfamily. Homodimer. Mg(2+) is required as a cofactor.

The protein resides in the cytoplasm. It carries out the reaction (R)-mevalonate + ATP = (R)-5-phosphomevalonate + ADP + H(+). The protein operates within isoprenoid biosynthesis; isopentenyl diphosphate biosynthesis via mevalonate pathway; isopentenyl diphosphate from (R)-mevalonate: step 1/3. Its function is as follows. Catalyzes the phosphorylation of (R)-mevalonate (MVA) to (R)-mevalonate 5-phosphate (MVAP). Functions in the mevalonate (MVA) pathway leading to isopentenyl diphosphate (IPP), a key precursor for the biosynthesis of isoprenoid compounds such as archaeal membrane lipids. The protein is Mevalonate kinase of Thermococcus onnurineus (strain NA1).